The following is a 141-amino-acid chain: Small ribosomal subunit protein bS6 (141 aa).

A disordered region spans residues 97-141 (TGQSEMLKAEENRSERRERRDRPEHSDSADGDDGDNSDVSDNADE). Over residues 103–124 (LKAEENRSERRERRDRPEHSDS) the composition is skewed to basic and acidic residues. Residues 125 to 141 (ADGDDGDNSDVSDNADE) are compositionally biased toward acidic residues.

This sequence belongs to the bacterial ribosomal protein bS6 family.

Functionally, binds together with bS18 to 16S ribosomal RNA. This chain is Small ribosomal subunit protein bS6, found in Pseudomonas syringae pv. syringae (strain B728a).